The primary structure comprises 79 residues: MDNVSMDMLYIAVAVMIGLAAIGAAVGIGILGSKFLEGVARQPDLTSLLRTQFFVVMGLVDAIPMIAVGLGLYMLFAVI.

The next 2 membrane-spanning stretches (helical) occupy residues 11–31 (IAVAVMIGLAAIGAAVGIGIL) and 59–79 (LVDAIPMIAVGLGLYMLFAVI).

The protein belongs to the ATPase C chain family. As to quaternary structure, F-type ATPases have 2 components, F(1) - the catalytic core - and F(0) - the membrane proton channel. F(1) has five subunits: alpha(3), beta(3), gamma(1), delta(1), epsilon(1). F(0) has three main subunits: a(1), b(2) and c(10-14). The alpha and beta chains form an alternating ring which encloses part of the gamma chain. F(1) is attached to F(0) by a central stalk formed by the gamma and epsilon chains, while a peripheral stalk is formed by the delta and b chains.

Its subcellular location is the cell membrane. F(1)F(0) ATP synthase produces ATP from ADP in the presence of a proton or sodium gradient. F-type ATPases consist of two structural domains, F(1) containing the extramembraneous catalytic core and F(0) containing the membrane proton channel, linked together by a central stalk and a peripheral stalk. During catalysis, ATP synthesis in the catalytic domain of F(1) is coupled via a rotary mechanism of the central stalk subunits to proton translocation. In terms of biological role, key component of the F(0) channel; it plays a direct role in translocation across the membrane. A homomeric c-ring of between 10-14 subunits forms the central stalk rotor element with the F(1) delta and epsilon subunits. The sequence is that of ATP synthase subunit c from Buchnera aphidicola subsp. Baizongia pistaciae (strain Bp).